Consider the following 412-residue polypeptide: NADH-quinone oxidoreductase subunit D (412 aa).

It belongs to the complex I 49 kDa subunit family. As to quaternary structure, NDH-1 is composed of 14 different subunits. Subunits NuoB, C, D, E, F, and G constitute the peripheral sector of the complex.

The protein localises to the cell inner membrane. It carries out the reaction a quinone + NADH + 5 H(+)(in) = a quinol + NAD(+) + 4 H(+)(out). Its function is as follows. NDH-1 shuttles electrons from NADH, via FMN and iron-sulfur (Fe-S) centers, to quinones in the respiratory chain. The immediate electron acceptor for the enzyme in this species is believed to be ubiquinone. Couples the redox reaction to proton translocation (for every two electrons transferred, four hydrogen ions are translocated across the cytoplasmic membrane), and thus conserves the redox energy in a proton gradient. This chain is NADH-quinone oxidoreductase subunit D, found in Sulfurimonas denitrificans (strain ATCC 33889 / DSM 1251) (Thiomicrospira denitrificans (strain ATCC 33889 / DSM 1251)).